A 355-amino-acid chain; its full sequence is Uroporphyrinogen decarboxylase (355 aa).

Substrate-binding positions include 27–31, phenylalanine 46, aspartate 77, tyrosine 154, threonine 209, and histidine 328; that span reads RQAGR.

It belongs to the uroporphyrinogen decarboxylase family. Homodimer.

Its subcellular location is the cytoplasm. It carries out the reaction uroporphyrinogen III + 4 H(+) = coproporphyrinogen III + 4 CO2. It functions in the pathway porphyrin-containing compound metabolism; protoporphyrin-IX biosynthesis; coproporphyrinogen-III from 5-aminolevulinate: step 4/4. Catalyzes the decarboxylation of four acetate groups of uroporphyrinogen-III to yield coproporphyrinogen-III. This is Uroporphyrinogen decarboxylase from Vibrio vulnificus (strain CMCP6).